Here is a 446-residue protein sequence, read N- to C-terminus: Phosphoglucosamine mutase (446 aa).

Ser102 acts as the Phosphoserine intermediate in catalysis. Mg(2+)-binding residues include Ser102, Asp241, Asp243, and Asp245. Phosphoserine is present on Ser102.

This sequence belongs to the phosphohexose mutase family. Mg(2+) serves as cofactor. Post-translationally, activated by phosphorylation.

The enzyme catalyses alpha-D-glucosamine 1-phosphate = D-glucosamine 6-phosphate. Functionally, catalyzes the conversion of glucosamine-6-phosphate to glucosamine-1-phosphate. This Idiomarina loihiensis (strain ATCC BAA-735 / DSM 15497 / L2-TR) protein is Phosphoglucosamine mutase.